A 128-amino-acid chain; its full sequence is Small ribosomal subunit protein uS9 (128 aa).

Belongs to the universal ribosomal protein uS9 family.

This chain is Small ribosomal subunit protein uS9, found in Christiangramia forsetii (strain DSM 17595 / CGMCC 1.15422 / KT0803) (Gramella forsetii).